A 143-amino-acid chain; its full sequence is Interferon gamma (143 aa).

A Pyrrolidone carboxylic acid modification is found at glutamine 1. Residues asparagine 25 and asparagine 97 are each glycosylated (N-linked (GlcNAc...) asparagine).

It belongs to the type II (or gamma) interferon family. Homodimer. Interacts with IFNGR1 (via extracellular domain); this interaction promotes IFNGR1 dimerization.

The protein resides in the secreted. Functionally, type II interferon produced by immune cells such as T-cells and NK cells that plays crucial roles in antimicrobial, antiviral, and antitumor responses by activating effector immune cells and enhancing antigen presentation. Primarily signals through the JAK-STAT pathway after interaction with its receptor IFNGR1 to affect gene regulation. Upon IFNG binding, IFNGR1 intracellular domain opens out to allow association of downstream signaling components JAK2, JAK1 and STAT1, leading to STAT1 activation, nuclear translocation and transcription of IFNG-regulated genes. Many of the induced genes are transcription factors such as IRF1 that are able to further drive regulation of a next wave of transcription. Plays a role in class I antigen presentation pathway by inducing a replacement of catalytic proteasome subunits with immunoproteasome subunits. In turn, increases the quantity, quality, and repertoire of peptides for class I MHC loading. Increases the efficiency of peptide generation also by inducing the expression of activator PA28 that associates with the proteasome and alters its proteolytic cleavage preference. Up-regulates as well MHC II complexes on the cell surface by promoting expression of several key molecules such as cathepsins B/CTSB, H/CTSH, and L/CTSL. Participates in the regulation of hematopoietic stem cells during development and under homeostatic conditions by affecting their development, quiescence, and differentiation. This chain is Interferon gamma (IFNG), found in Pan troglodytes (Chimpanzee).